A 179-amino-acid chain; its full sequence is Peptide deformylase (179 aa).

Residues C102 and H144 each contribute to the Fe cation site. E145 is a catalytic residue. H148 serves as a coordination point for Fe cation.

The protein belongs to the polypeptide deformylase family. The cofactor is Fe(2+).

The catalysed reaction is N-terminal N-formyl-L-methionyl-[peptide] + H2O = N-terminal L-methionyl-[peptide] + formate. Its function is as follows. Removes the formyl group from the N-terminal Met of newly synthesized proteins. Requires at least a dipeptide for an efficient rate of reaction. N-terminal L-methionine is a prerequisite for activity but the enzyme has broad specificity at other positions. This is Peptide deformylase from Wolbachia pipientis subsp. Culex pipiens (strain wPip).